The primary structure comprises 707 residues: Zinc finger CCHC domain-containing protein 8 (707 aa).

An N-acetylalanine modification is found at alanine 2. The segment at phenylalanine 16–valine 44 is disordered. A compositionally biased stretch (acidic residues) spans aspartate 34–glycine 43. Residues glycine 45–proline 80 are a coiled coil. Residues proline 227–methionine 244 form a CCHC-type zinc finger. 2 RBM7 binding regions span residues phenylalanine 286–leucine 299 and phenylalanine 309–lysine 324. Threonine 342 carries the post-translational modification Phosphothreonine. 3 disordered regions span residues alanine 409–glutamate 518, leucine 531–cysteine 607, and glutamine 641–isoleucine 660. Residue lysine 413 forms a Glycyl lysine isopeptide (Lys-Gly) (interchain with G-Cter in SUMO2) linkage. A compositionally biased stretch (low complexity) spans serine 456–glutamine 465. A compositionally biased stretch (pro residues) spans proline 466–threonine 496. A phosphothreonine mark is found at threonine 472, threonine 479, and threonine 485. A Phosphothreonine; by GSK3 modification is found at threonine 492. Positions threonine 516–serine 539 form a coiled coil. Residues leucine 549–cysteine 559 are compositionally biased toward polar residues. At threonine 577 the chain carries Phosphothreonine. Serine 598 is modified (phosphoserine). A compositionally biased stretch (polar residues) spans serine 598–cysteine 607. Threonine 648 is subject to Phosphothreonine. Phosphoserine occurs at positions 649, 658, and 695. The tract at residues proline 659 to glutamate 707 is MTREX binding.

Belongs to the ZCCHC8 family. As to quaternary structure, component of a nuclear TRAMP-like complex, an ATP-dependent exosome regulatory complex consisting of a helicase (MTREX), an oligadenylate polymerase (TENT4B or TENT4A), and a substrate specific RNA-binding factor (ZCCHC7 or ZCCHC8). Several TRAMP-like complexes exist with specific compositions and are associated with nuclear, or nucleolar RNA exosomes. Identified in the spliceosome C complex. Component of the nuclear exosome targeting (NEXT) complex composed of MTREX, ZCCHC8, and RBM7 that directs a subset of non-coding short-lived RNAs for exosomal degradation. Interacts with proteins involved in RNA processing and degradation such as MTREX and RBM7; interaction with MTREX enhances MTREX RNA helicase activity and bridges between RBM7 and MTREX. Interacts with TERC, the telomerase RNA component. Post-translationally, phosphorylation at Thr-492 by GSK3 is triggered in cells entering mitosis; this phosphorylation is greatly enhanced by nocodazole treatment, but reduced by lithium.

It localises to the nucleus. The protein localises to the nucleoplasm. Its function is as follows. Scaffolding subunit of the trimeric nuclear exosome targeting (NEXT) complex that is involved in the surveillance and turnover of aberrant transcripts and non-coding RNAs. NEXT functions as an RNA exosome cofactor that directs a subset of non-coding short-lived RNAs for exosomal degradation. May be involved in pre-mRNA splicing. It is required for 3'-end maturation of telomerase RNA component (TERC), TERC 3'-end targeting to the nuclear RNA exosome, and for telomerase function. This Homo sapiens (Human) protein is Zinc finger CCHC domain-containing protein 8 (ZCCHC8).